Here is a 184-residue protein sequence, read N- to C-terminus: Peptidyl-tRNA hydrolase (184 aa).

Tyr14 is a binding site for tRNA. The Proton acceptor role is filled by His19. The tRNA site is built by Phe64, Asn66, and Asn112.

Belongs to the PTH family. As to quaternary structure, monomer.

Its subcellular location is the cytoplasm. The enzyme catalyses an N-acyl-L-alpha-aminoacyl-tRNA + H2O = an N-acyl-L-amino acid + a tRNA + H(+). In terms of biological role, hydrolyzes ribosome-free peptidyl-tRNAs (with 1 or more amino acids incorporated), which drop off the ribosome during protein synthesis, or as a result of ribosome stalling. Its function is as follows. Catalyzes the release of premature peptidyl moieties from peptidyl-tRNA molecules trapped in stalled 50S ribosomal subunits, and thus maintains levels of free tRNAs and 50S ribosomes. The sequence is that of Peptidyl-tRNA hydrolase from Thermoanaerobacter pseudethanolicus (strain ATCC 33223 / 39E) (Clostridium thermohydrosulfuricum).